A 994-amino-acid chain; its full sequence is Translocase of chloroplast 108, chloroplastic (994 aa).

Disordered stretches follow at residues 14–61 (KEAS…EDEP), 84–124 (TTDL…DPSV), and 152–287 (AVDG…DETR). Polar residues-rich tracts occupy residues 37–53 (GETT…ANES) and 84–98 (TTDL…TPSN). Positions 99 to 121 (AEKESPEATEVRIVEEGKLEKAD) are enriched in basic and acidic residues. Positions 166–197 (NDGDTDANTADEDNENDEDDVDEDEDEDDADM) are enriched in acidic residues. The segment covering 249–268 (ASDSPGRNTQRPNGALSTQI) has biased composition (polar residues). A compositionally biased stretch (low complexity) spans 269 to 280 (TSTTDESASSDA). The region spanning 360–589 (DFACTILVLG…KLQETTAPGR (230 aa)) is the AIG1-type G domain. A G1 region spans residues 369 to 376 (GKTGVGKS). 372-377 (GVGKSS) lines the GTP pocket. A Mg(2+)-binding site is contributed by Ser-376. The interval 395–399 (PSTNK) is G2. Positions 416–419 (DTPG) are G3. The G4 stretch occupies residues 488-491 (THAS). Residues His-489 and 537-538 (EN) contribute to the GTP site. The G5 stretch occupies residues 537–539 (ENH). 2 disordered regions span residues 616–659 (LPDE…EDLT) and 691–716 (EAKK…EAGN). Over residues 620–643 (QAGESDESDDDEEEEDSDADDYDE) the composition is skewed to acidic residues. A compositionally biased stretch (basic and acidic residues) spans 650 to 659 (LSKEELEDLT). Acidic residues predominate over residues 705 to 714 (AEAEEAEDEA). A helical membrane pass occupies residues 969 to 989 (MVLIGIVPILRSLINCRFGFG).

It belongs to the TRAFAC class TrmE-Era-EngA-EngB-Septin-like GTPase superfamily. AIG1/Toc34/Toc159-like paraseptin GTPase family. TOC159 subfamily. Part of the TOC core complex. Requires Mg(2+) as cofactor.

The protein resides in the plastid. The protein localises to the chloroplast outer membrane. In terms of biological role, GTPase involved in protein precursor import into chloroplasts. Seems to recognize chloroplast-destined precursor proteins and regulate their presentation to the translocation channel through GTP hydrolysis. Probably specialized in the import of nuclear encoded non-photosynthetic preproteins from the cytoplasm to the chloroplast. The sequence is that of Translocase of chloroplast 108, chloroplastic from Physcomitrium patens (Spreading-leaved earth moss).